The primary structure comprises 351 residues: Purine permease 3 (351 aa).

A run of 10 helical transmembrane segments spans residues 4–24, 35–55, 72–92, 108–128, 132–152, 168–188, 207–227, 249–269, 274–294, and 304–324; these read ALVI…PLIM, IWFS…PLLF, FFLI…LSGF, TAAL…FFMV, FTPF…VLGM, ITGF…LPLV, FQLI…FIAG, VAVF…GLIF, LVSG…AVIF, and GLSL…EIKS. Positions 45–152 constitute an EamA domain; sequence GFPVIFIPLL…LTVGAAVLGM (108 aa). Residues 329–351 are disordered; it reads RRIQQEESQETEQSSLSRPISEC.

It belongs to the purine permeases (TC 2.A.7.14) family. Restricted to pollen.

It is found in the membrane. Its function is as follows. May be involved in transport of purine derivatives during pollen germination and tube elongation. The sequence is that of Purine permease 3 (PUP3) from Arabidopsis thaliana (Mouse-ear cress).